Here is a 271-residue protein sequence, read N- to C-terminus: MRPYVLGLPRYANVAPLHHFLRLEGFRVLHAVPAELNRLLLSGEVGLSLVSSYFYLKHQDSLGLLPDFSVAVLGRVYSVNLFHKGALPHLARVALTTESATSVALLKLLLKEAGAGPRYERREGGLELLSAYDGVLLIGDRAIKAYAALLPEVPETPHALPTRFGEVEVADLSTLWFQRTHLPFVFAVWAYRRENPPPKALVQALREARREGLGRLREVAEAEARRLGVHPLLLQHYLWNFRYHLEEPDRLGLKAFAEALGLPFAPMFYPE.

It belongs to the MqnA/MqnD family. MqnA subfamily.

It catalyses the reaction chorismate = 3-[(1-carboxyvinyl)-oxy]benzoate + H2O. It participates in quinol/quinone metabolism; menaquinone biosynthesis. In terms of biological role, catalyzes the dehydration of chorismate into 3-[(1-carboxyvinyl)oxy]benzoate, a step in the biosynthesis of menaquinone (MK, vitamin K2). In Thermus thermophilus (strain ATCC 27634 / DSM 579 / HB8), this protein is Chorismate dehydratase.